The following is a 957-amino-acid chain: Glycine dehydrogenase (decarboxylating) 2 (957 aa).

An N6-(pyridoxal phosphate)lysine modification is found at Lys707.

It belongs to the GcvP family. The glycine cleavage system is composed of four proteins: P, T, L and H. It depends on pyridoxal 5'-phosphate as a cofactor.

The enzyme catalyses N(6)-[(R)-lipoyl]-L-lysyl-[glycine-cleavage complex H protein] + glycine + H(+) = N(6)-[(R)-S(8)-aminomethyldihydrolipoyl]-L-lysyl-[glycine-cleavage complex H protein] + CO2. The glycine cleavage system catalyzes the degradation of glycine. The P protein binds the alpha-amino group of glycine through its pyridoxal phosphate cofactor; CO(2) is released and the remaining methylamine moiety is then transferred to the lipoamide cofactor of the H protein. The chain is Glycine dehydrogenase (decarboxylating) 2 from Pseudomonas fluorescens (strain Pf0-1).